A 159-amino-acid polypeptide reads, in one-letter code: Ankyrin repeat domain-containing protein 37 (159 aa).

3 ANK repeats span residues 1–25 (MLLL…SVNA), 30–59 (QEQS…DLNQ), and 63–92 (LGET…QIGV). The Nuclear localization signal signature appears at 130–150 (EQQERDPRAPVLRQKRSFRTV).

In terms of processing, ubiquitinated by the CRL2(FEM1B) complex, leading to its degradation. As to expression, expressed testis, ovary, uterus, kidney, liver, but not in other tissues.

It localises to the nucleus. It is found in the cytoplasm. The chain is Ankyrin repeat domain-containing protein 37 from Mus musculus (Mouse).